A 461-amino-acid polypeptide reads, in one-letter code: MDILFRIRGGFDLAFQLAPPKEMFIKNALRQVLNDLTTKLSSDALVFRICNSSVYLWPNSDANTGELTDSSACKSVVDLIQFDQEEDTKRKFMKKKDKKLTDMQQIVNIDLMLEISTPLGAVTPIIERENEEHHYINMSLPIDAVVSVAPEETWGKVRKLLVDAILNQLVDVEKCILRYMKGTSIVVPEPLHFLLPGGKNLVTVLYPSGIPDDQLQAYRKELHDLFKLPHDRPYLKRINAYHFPDELYKDGYIRNPHAYLSPPNIEGSMICMVQGTYAYHHYMQNRVDDNGWGCAYRSLQTVCSWFRHQGYTERAIPTHREIQQALVDAGDKPATFVGSRQWIGSIEVQLVLNQLIGVTSKILFVNQGSEMASQGRELANHFQNVGTPVMIGGGVLAHTILGVAWNETTGQIKFLILDPHYTGAEDLQVILEKGWCGWKGPDFWNKDAYYNLCLPQRPNAL.

Active-site residues include cysteine 294, aspartate 418, and histidine 420.

The protein belongs to the peptidase C78 family.

The protein resides in the endoplasmic reticulum. Its subcellular location is the cytoplasm. It is found in the nucleus. Thiol-dependent isopeptidase that specifically cleaves UFM1, a ubiquitin-like modifier protein, from conjugated proteins, such as CD274/PD-L1, CYB5R3, DDRGK1, MRE11, RPL26/uL24, TRIP4 and RPL26/uL24. While it is also able to mediate the processing of UFM1 precursors, a prerequisite for conjugation reactions, UFSP2 mainly acts as a protein deUFMylase that mediates deconjugation of UFM1 from target proteins. Mediates deUFMylation of RPL26/uL24, a critical step to release the UFM1 ribosome E3 ligase (UREL) complex during the recycling of 60S ribosome subunits from the endoplasmic reticulum. Catalyzes deUFMylation of TRIP4, regulating intracellular nuclear receptors transactivation and thereby regulate cell proliferation and differentiation. This Rattus norvegicus (Rat) protein is Ufm1-specific protease 2.